The sequence spans 678 residues: Dol-P-Man:Man(7)GlcNAc(2)-PP-Dol alpha-1,6-mannosyltransferase (678 aa).

11 helical membrane-spanning segments follow: residues 1 to 21, 56 to 76, 81 to 101, 109 to 129, 133 to 153, 168 to 188, 200 to 220, 252 to 272, 279 to 299, 301 to 321, and 334 to 354; these read MDILIFVTAAAHLVYTPFTKV, FIGPLVVSIISAPFVLLFETL, FWAQYVVRLVLAGAISVAWNS, IYGVEVRLWFTAITITQFHFM, TRPLPNIFALPIVLFAIAYWL, ILVFRSELALFLGILLVVSLL, VALPAGVCILAATVLVDSFFW, FYSALPRAMGASLVLVPIGVA, PLVLSALLFVLLYSILPHKEL, FIIYVFPVLNIAAACACQRIW, and ALACGAHLLLNVFITLFLLVI.

This sequence belongs to the glycosyltransferase 22 family.

It localises to the endoplasmic reticulum membrane. It catalyses the reaction an alpha-D-Man-(1-&gt;2)-alpha-D-Man-(1-&gt;2)-alpha-D-Man-(1-&gt;3)-[alpha-D-Man-(1-&gt;2)-alpha-D-Man-(1-&gt;3)-alpha-D-Man-(1-&gt;6)]-beta-D-Man-(1-&gt;4)-beta-D-GlcNAc-(1-&gt;4)-alpha-D-GlcNAc-diphospho-di-trans,poly-cis-dolichol + a di-trans,poly-cis-dolichyl beta-D-mannosyl phosphate = an alpha-D-Man-(1-&gt;2)-alpha-D-Man-(1-&gt;2)-alpha-D-Man-(1-&gt;3)-[alpha-D-Man-(1-&gt;2)-alpha-D-Man-(1-&gt;3)-[alpha-D-Man-(1-&gt;6)]-alpha-D-Man-(1-&gt;6)]-beta-D-Man-(1-&gt;4)-beta-D-GlcNAc-(1-&gt;4)-alpha-D-GlcNAc-diphospho-di-trans,poly-cis-dolichol + a di-trans,poly-cis-dolichyl phosphate + H(+). Its pathway is protein modification; protein glycosylation. Functionally, mannosyltransferase that operates in the biosynthetic pathway of dolichol-linked oligosaccharides, the glycan precursors employed in protein asparagine (N)-glycosylation. The assembly of dolichol-linked oligosaccharides begins on the cytosolic side of the endoplasmic reticulum membrane and finishes in its lumen. The sequential addition of sugars to dolichol pyrophosphate produces dolichol-linked oligosaccharides containing fourteen sugars, including two GlcNAcs, nine mannoses and three glucoses. Once assembled, the oligosaccharide is transferred from the lipid to nascent proteins by oligosaccharyltransferases. In the lumen of the endoplasmic reticulum, adds the eighth mannose residue in an alpha-1,6 linkage onto Man(7)GlcNAc(2)-PP-dolichol to produce Man(8)GlcNAc(2)-PP-dolichol. This Drosophila melanogaster (Fruit fly) protein is Dol-P-Man:Man(7)GlcNAc(2)-PP-Dol alpha-1,6-mannosyltransferase.